The sequence spans 377 residues: Spermidine/putrescine import ATP-binding protein PotA (377 aa).

In terms of domain architecture, ABC transporter spans 18 to 248; that stretch reads IRLSGISKSF…PKNLFVARFI (231 aa). 50–57 provides a ligand contact to ATP; the sequence is GPSGCGKT.

Belongs to the ABC transporter superfamily. Spermidine/putrescine importer (TC 3.A.1.11.1) family. As to quaternary structure, the complex is composed of two ATP-binding proteins (PotA), two transmembrane proteins (PotB and PotC) and a solute-binding protein (PotD).

The protein localises to the cell inner membrane. It carries out the reaction ATP + H2O + polyamine-[polyamine-binding protein]Side 1 = ADP + phosphate + polyamineSide 2 + [polyamine-binding protein]Side 1.. In terms of biological role, part of the ABC transporter complex PotABCD involved in spermidine/putrescine import. Responsible for energy coupling to the transport system. In Vibrio parahaemolyticus serotype O3:K6 (strain RIMD 2210633), this protein is Spermidine/putrescine import ATP-binding protein PotA.